Consider the following 520-residue polypeptide: GMP synthase [glutamine-hydrolyzing] (520 aa).

Residues 12 to 205 (KIIVLDYGSQ…AISICGARGD (194 aa)) form the Glutamine amidotransferase type-1 domain. Cys-89 functions as the Nucleophile in the catalytic mechanism. Active-site residues include His-179 and Glu-181. Residues 206 to 395 (WSMDNFIDME…LGMPEEIVWR (190 aa)) enclose the GMPS ATP-PPase domain. 233-239 (SGGVDSS) is a binding site for ATP.

In terms of assembly, homodimer.

The catalysed reaction is XMP + L-glutamine + ATP + H2O = GMP + L-glutamate + AMP + diphosphate + 2 H(+). Its pathway is purine metabolism; GMP biosynthesis; GMP from XMP (L-Gln route): step 1/1. Functionally, catalyzes the synthesis of GMP from XMP. This chain is GMP synthase [glutamine-hydrolyzing], found in Streptococcus pyogenes serotype M5 (strain Manfredo).